Reading from the N-terminus, the 326-residue chain is UDP-N-acetylglucosamine transporter (326 aa).

Transmembrane regions (helical) follow at residues 4-24 (NLKYLSLGILVFQTTSLVLTM), 38-58 (LSSTAVVVAELLKIMACILLV), 136-156 (LGVYQWLSLVILMTGVAFVQW), 174-194 (FVGLMAVLTACFSSGFAGVYF), 212-232 (LGFFGSIFGLMGVYVYDGELV), 244-264 (LTWIVVVLQALGGLVIAAVIK), 269-289 (ILKGFATSLSIILSTLISYFW), and 293-313 (FVPTSVFFLGAILVITATFLY).

It belongs to the nucleotide-sugar transporter family. SLC35A subfamily. As to quaternary structure, interacts with SLC35A2; the interaction is reduced in the presence of SLC35A4. Found in a complex with SLC35A2 and SLC35A4. Interacts with MGAT4B. Post-translationally, O-Glcnacylation regulates the stability of SLC35A3 and the specific complex formation with MGAT4B.

Its subcellular location is the golgi apparatus membrane. The enzyme catalyses UMP(out) + UDP-N-acetyl-alpha-D-glucosamine(in) = UMP(in) + UDP-N-acetyl-alpha-D-glucosamine(out). Its function is as follows. Transports diphosphate-N-acetylglucosamine (UDP-GlcNAc) from the cytosol into the lumen of the Golgi apparatus, functioning as an antiporter that exchanges UDP-N-acetyl-alpha-D-glucosamine for UMP. May supply UDP-GlcNAc as substrate for Golgi-resident glycosyltransferases that generate highly branched, multiantennary complex N-glycans and keratan sulfate. However, the exact role of SLC35A3 still needs to be elucidated, it could be a member of a catalytically more efficient multiprotein complex rather than function independently as a single transporter. The chain is UDP-N-acetylglucosamine transporter (SLC35A3) from Bos taurus (Bovine).